The sequence spans 331 residues: D-lactate/D-glycerate dehydrogenase (331 aa).

NAD(+) is bound by residues 154–155, aspartate 174, 205–206, asparagine 211, 232–234, and aspartate 258; these read RI, VP, and FAR. Arginine 234 is a catalytic residue. Residue glutamate 263 is part of the active site. The active-site Proton donor is the histidine 295.

It belongs to the D-isomer specific 2-hydroxyacid dehydrogenase family. In terms of assembly, homodimer.

The enzyme catalyses (R)-lactate + NAD(+) = pyruvate + NADH + H(+). The catalysed reaction is (R)-glycerate + NAD(+) = 3-hydroxypyruvate + NADH + H(+). Its function is as follows. Has both D-lactate and D-glycerate dehydrogenase activities. Equally active on pyruvate and hydroxypyruvate. This Pediococcus acidilactici protein is D-lactate/D-glycerate dehydrogenase.